A 206-amino-acid polypeptide reads, in one-letter code: Protein Nef (206 aa).

Gly2 carries the N-myristoyl glycine; by host lipid modification. Ser6 bears the Phosphoserine; by host mark. The segment at 62–65 (QNEE) is acidic; interacts with host PACS1 and PACS2; stabilizes the interaction of NEF/MHC-I with host AP1M1; necessary for MHC-I internalization. An SH3-binding; interaction with Src family tyrosine kinases region spans residues 69–78 (PVRPQVPLRP). Residues 72–75 (PQVP) carry the PxxP; stabilizes the interaction of NEF/MHC-I with host AP1M1; necessary for MHC-I internalization motif. Residues 108–124 (EILDLWVYHTQGFFPDW) are mediates dimerization, Nef-PTE1 interaction. Residues 148-180 (LEPEEVERANEGDNNILLHPICQHGQEDEAREV) form a binding to ATP6V1H region. A Dileucine internalization motif; necessary for CD4 internalization motif is present at residues 164 to 165 (LL). The Diacidic; necessary for CD4 internalization motif lies at 174-175 (ED).

The protein belongs to the lentivirus primate group Nef protein family. In terms of assembly, monomer; cytosolic form. Homodimer; membrane bound form. Interacts with Nef associated p21-activated kinase (PAK2); this interaction activates PAK2. Associates with the Nef-MHC-I-AP1 complex; this complex is required for MHC-I internalization. Interacts (via C-terminus) with host PI3-kinase. Interacts with host PACS1; this interaction seems to be weak. Interacts with host PACS2. Interacts with host LCK and MAPK3; these interactions inhibit the kinase activity of the latter. Interacts with host ATP6V1H; this interaction may play a role in CD4 endocytosis. Associates with the CD4-Nef-AP2 complex; this complex is required for CD4 internalization. Interacts with host AP2 subunit alpha and AP2 subunit sigma2. Interacts with TCR-zeta chain; this interaction up-regulates the Fas ligand (FasL) surface expression. Interacts with host HCK, LYN, and SRC; these interactions activate the Src family kinases. Interacts with MAP3K5; this interaction inhibits the Fas and TNFR-mediated death signals. Interacts with beta-COP and PTE1. Interacts with human RACK1; this increases Nef phosphorylation by PKC. Interacts with TP53; this interaction decreases the half-life of TP53, protecting the infected cell against p53-mediated apoptosis. Post-translationally, the virion-associated Nef proteins are cleaved by the viral protease to release the soluble C-terminal core protein. Nef is probably cleaved concomitantly with viral structural proteins on maturation of virus particles. Myristoylated. In terms of processing, phosphorylated on serine residues, probably by host PKCdelta and theta.

It is found in the host cell membrane. Its subcellular location is the virion. The protein resides in the secreted. The protein localises to the host Golgi apparatus membrane. Functionally, factor of infectivity and pathogenicity, required for optimal virus replication. Alters numerous pathways of T-lymphocyte function and down-regulates immunity surface molecules in order to evade host defense and increase viral infectivity. Alters the functionality of other immunity cells, like dendritic cells, monocytes/macrophages and NK cells. In terms of biological role, in infected CD4(+) T-lymphocytes, down-regulates the surface MHC-I, mature MHC-II, CD4, CD28, CCR5 and CXCR4 molecules. Mediates internalization and degradation of host CD4 through the interaction of with the cytoplasmic tail of CD4, the recruitment of AP-2 (clathrin adapter protein complex 2), internalization through clathrin coated pits, and subsequent transport to endosomes and lysosomes for degradation. Diverts host MHC-I molecules to the trans-Golgi network-associated endosomal compartments by an endocytic pathway to finally target them for degradation. MHC-I down-regulation may involve AP-1 (clathrin adapter protein complex 1) or possibly Src family kinase-ZAP70/Syk-PI3K cascade recruited by PACS2. In consequence infected cells are masked for immune recognition by cytotoxic T-lymphocytes. Decreasing the number of immune receptors also prevents reinfection by more HIV particles (superinfection). Down-regulates host SERINC3 and SERINC5 thereby excluding these proteins from the viral particles. Virion infectivity is drastically higher when SERINC3 or SERINC5 are excluded from the viral envelope, because these host antiviral proteins impair the membrane fusion event necessary for subsequent virion penetration. Bypasses host T-cell signaling by inducing a transcriptional program nearly identical to that of anti-CD3 cell activation. Interaction with TCR-zeta chain up-regulates the Fas ligand (FasL). Increasing surface FasL molecules and decreasing surface MHC-I molecules on infected CD4(+) cells send attacking cytotoxic CD8+ T-lymphocytes into apoptosis. Its function is as follows. Plays a role in optimizing the host cell environment for viral replication without causing cell death by apoptosis. Protects the infected cells from apoptosis in order to keep them alive until the next virus generation is ready to strike. Inhibits the Fas and TNFR-mediated death signals by blocking MAP3K5/ASK1. Decreases the half-life of TP53, protecting the infected cell against p53-mediated apoptosis. Inhibits the apoptotic signals regulated by the Bcl-2 family proteins through the formation of a Nef/PI3-kinase/PAK2 complex that leads to activation of PAK2 and induces phosphorylation of host BAD. Functionally, extracellular Nef protein targets CD4(+) T-lymphocytes for apoptosis by interacting with CXCR4 surface receptors. The protein is Protein Nef of Simian immunodeficiency virus (isolate MB66) (SIV-cpz).